A 231-amino-acid chain; its full sequence is NADH-ubiquinone oxidoreductase chain 4 (231 aa).

6 helical membrane passes run 1-21, 34-54, 63-85, 89-111, 128-148, and 156-176; these read PIAGSMVLAAILLKLGGYGII, MFLPFIVLALWGAILANLTCL, IAYSSVSHMGLVVAAIMIQTPWG, AMTLMIAHGFTSSALFCLANTTY, ILPMATTWWLLTNLMNIAIPP, and LLIMSALFSWCPTTIILLGLS.

The protein belongs to the complex I subunit 4 family.

It localises to the mitochondrion membrane. The catalysed reaction is a ubiquinone + NADH + 5 H(+)(in) = a ubiquinol + NAD(+) + 4 H(+)(out). Functionally, core subunit of the mitochondrial membrane respiratory chain NADH dehydrogenase (Complex I) that is believed to belong to the minimal assembly required for catalysis. Complex I functions in the transfer of electrons from NADH to the respiratory chain. The immediate electron acceptor for the enzyme is believed to be ubiquinone. This chain is NADH-ubiquinone oxidoreductase chain 4 (MT-ND4), found in Gloydius intermedius (Central Asian pit viper).